The following is a 487-amino-acid chain: Glutamyl-tRNA(Gln) amidotransferase subunit A (487 aa).

Residues Lys-79 and Ser-158 each act as charge relay system in the active site. The Acyl-ester intermediate role is filled by Ser-182.

The protein belongs to the amidase family. GatA subfamily. As to quaternary structure, heterotrimer of A, B and C subunits.

The catalysed reaction is L-glutamyl-tRNA(Gln) + L-glutamine + ATP + H2O = L-glutaminyl-tRNA(Gln) + L-glutamate + ADP + phosphate + H(+). Allows the formation of correctly charged Gln-tRNA(Gln) through the transamidation of misacylated Glu-tRNA(Gln) in organisms which lack glutaminyl-tRNA synthetase. The reaction takes place in the presence of glutamine and ATP through an activated gamma-phospho-Glu-tRNA(Gln). The chain is Glutamyl-tRNA(Gln) amidotransferase subunit A from Ehrlichia canis (strain Jake).